The chain runs to 166 residues: Monothiol glutaredoxin-3 (166 aa).

The Glutaredoxin domain maps to 56 to 159 (DSTDFEVFLE…STLDEWTHNK (104 aa)). C76 provides a ligand contact to [2Fe-2S] cluster.

Belongs to the glutaredoxin family. Monothiol subfamily. As to quaternary structure, homodimer.

The protein localises to the nucleus. In terms of biological role, monothiol glutaredoxin involved in the biogenesis of iron-sulfur clusters. Binds one iron-sulfur cluster per dimer. The iron-sulfur cluster is bound between subunits, and is complexed by a bound glutathione and a cysteine residue from each subunit. This Schizosaccharomyces pombe (strain 972 / ATCC 24843) (Fission yeast) protein is Monothiol glutaredoxin-3 (grx3).